Consider the following 1035-residue polypeptide: GRB10-interacting GYF protein 1 (1035 aa).

Phosphoserine occurs at positions 24, 28, 137, and 157. The tract at residues 105-422 (KGAGPPLAGT…AGPPGDLEDD (318 aa)) is disordered. 2 stretches are compositionally biased toward basic and acidic residues: residues 148–179 (SPRE…RCGF) and 186–203 (PRKE…SLRE). S230 carries the phosphoserine modification. A compositionally biased stretch (basic and acidic residues) spans 239–267 (GWREHGERRRKFEFDLRGDRGGCGEEEGR). Composition is skewed to acidic residues over residues 295–304 (CLDDEDEEMG) and 324–349 (PEEQ…EEGP). Position 341 is a phosphoserine (S341). The span at 367–378 (SSPSPLPTLGPL) shows a compositional bias: low complexity. Over residues 388 to 401 (TAEKEPPAAEDDIR) the composition is skewed to basic and acidic residues. The residue at position 406 (S406) is a Phosphoserine. Low complexity predominate over residues 406–417 (SPGVGSSAGPPG). In terms of domain architecture, GYF spans 474–522 (ARKWFYKDPQGEIQGPFTTQEMAEWFQAGYFSMSLLVKRGCDEGFQPLG). Residues S538 and S638 each carry the phosphoserine modification. 3 disordered regions span residues 621 to 640 (PPRG…LSVP), 696 to 724 (KREE…QEEE), and 825 to 879 (WGGP…RPIR). A compositionally biased stretch (polar residues) spans 629–639 (LLPTMSRSLSV). The span at 696 to 722 (KREEEERKRREEKRRQQQQEEQKRRQE) shows a compositional bias: basic and acidic residues. The segment covering 857 to 874 (LKNSRSSPSLSDSYSHLS) has biased composition (low complexity). S862 carries the post-translational modification Phosphoserine.

It belongs to the GIGYF family. As to quaternary structure, interacts with GRB10. This transient binding is increased under IGF1 stimulation and leads to recruitment of GIGYF1/GRB10 complex to IGF1 receptor. Interacts with DDX6.

May act cooperatively with GRB10 to regulate tyrosine kinase receptor signaling. May increase IGF1 receptor phosphorylation under IGF1 stimulation as well as phosphorylation of IRS1 and SHC1. This chain is GRB10-interacting GYF protein 1 (GIGYF1), found in Homo sapiens (Human).